A 133-amino-acid chain; its full sequence is Large ribosomal subunit protein uL15 (133 aa).

The interval 1–64 is disordered; that stretch reads MGLENLKPAK…QPLQRRLPKI (64 aa).

It belongs to the universal ribosomal protein uL15 family. Part of the 50S ribosomal subunit.

Binds to the 23S rRNA. The polypeptide is Large ribosomal subunit protein uL15 (Helicobacter pylori (strain G27)).